We begin with the raw amino-acid sequence, 188 residues long: Elongation factor P (188 aa).

It belongs to the elongation factor P family.

It localises to the cytoplasm. Its pathway is protein biosynthesis; polypeptide chain elongation. Functionally, involved in peptide bond synthesis. Stimulates efficient translation and peptide-bond synthesis on native or reconstituted 70S ribosomes in vitro. Probably functions indirectly by altering the affinity of the ribosome for aminoacyl-tRNA, thus increasing their reactivity as acceptors for peptidyl transferase. The chain is Elongation factor P from Pelodictyon phaeoclathratiforme (strain DSM 5477 / BU-1).